The following is a 183-amino-acid chain: Translation initiation factor IF-3 (183 aa).

The span at 1 to 13 (MKQPDRNQQQGAK) shows a compositional bias: polar residues. A disordered region spans residues 1–24 (MKQPDRNQQQGAKSNRPAINDEIR).

It belongs to the IF-3 family. Monomer.

The protein resides in the cytoplasm. In terms of biological role, IF-3 binds to the 30S ribosomal subunit and shifts the equilibrium between 70S ribosomes and their 50S and 30S subunits in favor of the free subunits, thus enhancing the availability of 30S subunits on which protein synthesis initiation begins. In Acinetobacter baylyi (strain ATCC 33305 / BD413 / ADP1), this protein is Translation initiation factor IF-3.